Reading from the N-terminus, the 370-residue chain is Queuine tRNA-ribosyltransferase (370 aa).

Aspartate 92 functions as the Proton acceptor in the catalytic mechanism. Substrate is bound by residues 92–96 (DSGGF), aspartate 146, glutamine 190, and glycine 217. An RNA binding region spans residues 248–254 (GVGTPEN). The active-site Nucleophile is the aspartate 267. Residues cysteine 305, cysteine 307, cysteine 310, and histidine 336 each coordinate Zn(2+).

Belongs to the queuine tRNA-ribosyltransferase family. In terms of assembly, homodimer. Within each dimer, one monomer is responsible for RNA recognition and catalysis, while the other monomer binds to the replacement base PreQ1. The cofactor is Zn(2+).

The catalysed reaction is 7-aminomethyl-7-carbaguanine + guanosine(34) in tRNA = 7-aminomethyl-7-carbaguanosine(34) in tRNA + guanine. Its pathway is tRNA modification; tRNA-queuosine biosynthesis. In terms of biological role, catalyzes the base-exchange of a guanine (G) residue with the queuine precursor 7-aminomethyl-7-deazaguanine (PreQ1) at position 34 (anticodon wobble position) in tRNAs with GU(N) anticodons (tRNA-Asp, -Asn, -His and -Tyr). Catalysis occurs through a double-displacement mechanism. The nucleophile active site attacks the C1' of nucleotide 34 to detach the guanine base from the RNA, forming a covalent enzyme-RNA intermediate. The proton acceptor active site deprotonates the incoming PreQ1, allowing a nucleophilic attack on the C1' of the ribose to form the product. After dissociation, two additional enzymatic reactions on the tRNA convert PreQ1 to queuine (Q), resulting in the hypermodified nucleoside queuosine (7-(((4,5-cis-dihydroxy-2-cyclopenten-1-yl)amino)methyl)-7-deazaguanosine). The sequence is that of Queuine tRNA-ribosyltransferase from Desulforapulum autotrophicum (strain ATCC 43914 / DSM 3382 / VKM B-1955 / HRM2) (Desulfobacterium autotrophicum).